The following is a 218-amino-acid chain: Peroxiredoxin-like 2A (218 aa).

The segment at 3-101 (MWSIGAGAIG…DELGVPLYAV (99 aa)) is thioredoxin fold. Residues cysteine 74 and cysteine 77 each act as redox-active in the active site.

Belongs to the peroxiredoxin-like PRXL2 family. PRXL2A subfamily.

It localises to the cytoplasm. It is found in the secreted. Its function is as follows. Involved in redox regulation of the cell. Acts as an antioxidant. Inhibits TNFSF11-induced NFKB1 and JUN activation and osteoclast differentiation. May affect bone resorption and help to maintain bone mass. Acts as a negative regulator of macrophage-mediated inflammation by inhibiting macrophage production of inflammatory cytokines, probably through suppression of the MAPK signaling pathway. The chain is Peroxiredoxin-like 2A (PRXL2A) from Bos taurus (Bovine).